We begin with the raw amino-acid sequence, 404 residues long: Phosphoglycerate kinase (404 aa).

Residues Asp-22–Asn-24, Arg-37, His-60–Arg-63, Arg-119, and Arg-156 contribute to the substrate site. ATP-binding positions include Lys-206, Gly-302, Glu-333, and Gly-359–Ser-362.

It belongs to the phosphoglycerate kinase family. In terms of assembly, monomer.

The protein resides in the cytoplasm. It carries out the reaction (2R)-3-phosphoglycerate + ATP = (2R)-3-phospho-glyceroyl phosphate + ADP. Its pathway is carbohydrate degradation; glycolysis; pyruvate from D-glyceraldehyde 3-phosphate: step 2/5. The protein is Phosphoglycerate kinase of Clavibacter michiganensis subsp. michiganensis (strain NCPPB 382).